Consider the following 163-residue polypeptide: Adenosine 5'-monophosphoramidase HINT2 (163 aa).

The N-terminal 17 residues, 1–17, are a transit peptide targeting the mitochondrion; sequence MAAAVVLAAGLCVARRA. An HIT domain is found at 55-163; the sequence is IFSRILDRSL…GGRQLQWPPG (109 aa). The AMP site is built by serine 63 and aspartate 80. Residue lysine 119 is modified to N6-acetyllysine. Asparagine 136 lines the AMP pocket. Lysine 139 bears the N6-acetyllysine mark. Residues 142-145 and 149-151 each bind AMP; these read AQSV and HIH. Positions 147-151 match the Histidine triad motif motif; the sequence is HLHIH. Residue histidine 149 is the Tele-AMP-histidine intermediate of the active site.

It belongs to the HINT family.

It is found in the mitochondrion. It catalyses the reaction adenosine 5'-phosphoramidate + H2O = AMP + NH4(+). Its function is as follows. Exhibits adenosine 5'-monophosphoramidase activity, hydrolyzing purine nucleotide phosphoramidates with a single phosphate group such as adenosine 5'monophosphoramidate (AMP-NH2) to yield AMP and NH2. Hydrolyzes adenosine 5'-O-p-nitrophenylphosphoramidate (AMP-pNA). May be involved in steroid biosynthesis. May play a role in apoptosis. In Bos taurus (Bovine), this protein is Adenosine 5'-monophosphoramidase HINT2.